The following is a 488-amino-acid chain: Prostaglandin E2 receptor EP4 subtype (488 aa).

Residues 1–19 (MSIPGVNASFSSTPERLNS) are Extracellular-facing. Asparagine 7 carries an N-linked (GlcNAc...) asparagine glycan. A helical transmembrane segment spans residues 20–43 (PVTIPAVMFIFGVVGNLVAIVVLC). Topologically, residues 44-55 (KSRKEQKETTFY) are cytoplasmic. Residues 56 to 79 (TLVCGLAVTDLLGTLLVSPVTIAT) form a helical membrane-spanning segment. The Extracellular segment spans residues 80–96 (YMKGQWPGDQALCDYST). Cysteine 92 and cysteine 170 are disulfide-bonded. The chain crosses the membrane as a helical span at residues 97–115 (FILLFFGLSGLSIICAMSI). The Cytoplasmic portion of the chain corresponds to 116-135 (ERYLAINHAYFYSHYVDKRL). Residues 136–160 (AGLTLFAVYASNVLFCALPNMGLGR) traverse the membrane as a helical segment. Residues 161–184 (SERQYPGTWCFIDWTTNVTAYAAF) lie on the Extracellular side of the membrane. Residues 185 to 211 (SYMYAGFSSFLILATVLCNVLVCGALL) form a helical membrane-spanning segment. Over 212-270 (RMLRQFMRRTSLGTEQHHAAAAAAVASVACRGHAAASPALQRLSDFRRRRSFRRIAGAE) the chain is Cytoplasmic. The helical transmembrane segment at 271-298 (IQMVILLIATSLVVLICSIPLVVRVFIN) threads the bilayer. The Extracellular portion of the chain corresponds to 299–315 (QLYQPSVVKDISRNPDL). A helical transmembrane segment spans residues 316–335 (QAIRIASVNPILDPWIYILL). Residues 336–488 (RKTVLSKAIE…ETLKLSEKCI (153 aa)) lie on the Cytoplasmic side of the membrane. Residues 358-380 (GRDGSAQHCSESRRTSSAMSGHS) are disordered. 4 positions are modified to phosphoserine: serine 377, serine 380, serine 382, and serine 385.

Belongs to the G-protein coupled receptor 1 family. In terms of assembly, interacts with FEM1A. Phosphorylation mediates agonist-mediated desensitization by promoting cytoplasmic retention.

The protein resides in the cell membrane. Its function is as follows. Receptor for prostaglandin E2 (PGE2). The activity of this receptor is mediated by G(s) proteins that stimulate adenylate cyclase. Has a relaxing effect on smooth muscle. May play an important role in regulating renal hemodynamics, intestinal epithelial transport, adrenal aldosterone secretion, and uterine function. The chain is Prostaglandin E2 receptor EP4 subtype (Ptger4) from Rattus norvegicus (Rat).